The sequence spans 237 residues: Beta-glucanase (237 aa).

The signal sequence occupies residues 1 to 23; it reads MKKKSCFTLVTTFAFSLIFSVSA. Positions 28–237 constitute a GH16 domain; it reads VFWEPLSYFN…EYDWVKYTSN (210 aa). Cysteine 55 and cysteine 84 form a disulfide bridge. Glutamate 128 functions as the Nucleophile in the catalytic mechanism. Glutamate 132 serves as the catalytic Proton donor.

This sequence belongs to the glycosyl hydrolase 16 family.

The enzyme catalyses Hydrolysis of (1-&gt;4)-beta-D-glucosidic linkages in beta-D-glucans containing (1-&gt;3)- and (1-&gt;4)-bonds.. The sequence is that of Beta-glucanase from Paenibacillus macerans (Bacillus macerans).